A 325-amino-acid polypeptide reads, in one-letter code: ATP synthase gamma chain (325 aa).

This sequence belongs to the ATPase gamma chain family. In terms of assembly, F-type ATPases have 2 components, CF(1) - the catalytic core - and CF(0) - the membrane proton channel. CF(1) has five subunits: alpha(3), beta(3), gamma(1), delta(1), epsilon(1). CF(0) has three main subunits: a, b and c.

The protein resides in the cell membrane. In terms of biological role, produces ATP from ADP in the presence of a proton gradient across the membrane. The gamma chain is believed to be important in regulating ATPase activity and the flow of protons through the CF(0) complex. The chain is ATP synthase gamma chain from Corynebacterium urealyticum (strain ATCC 43042 / DSM 7109).